The following is a 272-amino-acid chain: 5'-AMP-activated protein kinase subunit beta-2 (272 aa).

The tract at residues 1–52 is disordered; that stretch reads MGNTTSDRVSGERHGAKAARSEGAGGHAPGKEHKIMVGSTDDPSVFSLPDSK. Phosphoserine is present on Ser-39. Thr-40 carries the phosphothreonine modification. The residue at position 69 (Ser-69) is a Phosphoserine; by ULK1. 2 positions are modified to phosphoserine: Ser-95 and Ser-108. Phosphothreonine is present on Thr-148. Ser-158, Ser-170, Ser-174, and Ser-184 each carry phosphoserine.

Belongs to the 5'-AMP-activated protein kinase beta subunit family. As to quaternary structure, AMPK is a heterotrimer of an alpha catalytic subunit (PRKAA1 or PRKAA2), a beta (PRKAB1 or PRKAB2) and a gamma non-catalytic subunits (PRKAG1, PRKAG2 or PRKAG3). Phosphorylated when associated with the catalytic subunit (PRKAA1 or PRKAA2). Phosphorylated by ULK1 and ULK2; leading to negatively regulate AMPK activity and suggesting the existence of a regulatory feedback loop between ULK1, ULK2 and AMPK.

Non-catalytic subunit of AMP-activated protein kinase (AMPK), an energy sensor protein kinase that plays a key role in regulating cellular energy metabolism. In response to reduction of intracellular ATP levels, AMPK activates energy-producing pathways and inhibits energy-consuming processes: inhibits protein, carbohydrate and lipid biosynthesis, as well as cell growth and proliferation. AMPK acts via direct phosphorylation of metabolic enzymes, and by longer-term effects via phosphorylation of transcription regulators. Also acts as a regulator of cellular polarity by remodeling the actin cytoskeleton; probably by indirectly activating myosin. Beta non-catalytic subunit acts as a scaffold on which the AMPK complex assembles, via its C-terminus that bridges alpha (PRKAA1 or PRKAA2) and gamma subunits (PRKAG1, PRKAG2 or PRKAG3). This chain is 5'-AMP-activated protein kinase subunit beta-2 (PRKAB2), found in Homo sapiens (Human).